We begin with the raw amino-acid sequence, 340 residues long: Ferredoxin--NADP reductase (340 aa).

7 residues coordinate FAD: Asp-33, Gln-41, Tyr-46, Ala-86, Phe-120, Asp-286, and Thr-327.

It belongs to the ferredoxin--NADP reductase type 2 family. In terms of assembly, homodimer. FAD serves as cofactor.

It carries out the reaction 2 reduced [2Fe-2S]-[ferredoxin] + NADP(+) + H(+) = 2 oxidized [2Fe-2S]-[ferredoxin] + NADPH. The polypeptide is Ferredoxin--NADP reductase (Rickettsia rickettsii (strain Iowa)).